The chain runs to 48 residues: Large ribosomal subunit protein bL34 (48 aa).

This sequence belongs to the bacterial ribosomal protein bL34 family.

The chain is Large ribosomal subunit protein bL34 (rpmH) from Mycoplasma pneumoniae (strain ATCC 29342 / M129 / Subtype 1) (Mycoplasmoides pneumoniae).